The primary structure comprises 104 residues: Large ribosomal subunit protein eL42 (104 aa).

It belongs to the eukaryotic ribosomal protein eL42 family. In terms of assembly, component of the large ribosomal subunit. Mature ribosomes consist of a small (40S) and a large (60S) subunit. The 40S subunit contains about 32 different proteins and 1 molecule of RNA (18S). The 60S subunit contains about 42 different proteins and 3 molecules of RNA (28S, 5.8S and 5S).

It is found in the cytoplasm. Its function is as follows. Component of the ribosome, a large ribonucleoprotein complex responsible for the synthesis of proteins in the cell. The small ribosomal subunit (SSU) binds messenger RNAs (mRNAs) and translates the encoded message by selecting cognate aminoacyl-transfer RNA (tRNA) molecules. The large subunit (LSU) contains the ribosomal catalytic site termed the peptidyl transferase center (PTC), which catalyzes the formation of peptide bonds, thereby polymerizing the amino acids delivered by tRNAs into a polypeptide chain. The nascent polypeptides leave the ribosome through a tunnel in the LSU and interact with protein factors that function in enzymatic processing, targeting, and the membrane insertion of nascent chains at the exit of the ribosomal tunnel. This chain is Large ribosomal subunit protein eL42, found in Plasmodium falciparum (isolate 3D7).